A 277-amino-acid polypeptide reads, in one-letter code: Large ribosomal subunit protein uL2cz/uL2cy (277 aa).

2 disordered regions span residues 1–31 (MAIHLYKTSTPSTRNGAVDSQAKSNTRNTRK) and 227–277 (NPVD…RRSK).

It belongs to the universal ribosomal protein uL2 family. Part of the 50S ribosomal subunit.

It is found in the plastid. It localises to the chloroplast. The sequence is that of Large ribosomal subunit protein uL2cz/uL2cy (rpl2-A) from Manihot esculenta (Cassava).